The sequence spans 338 residues: Putative clathrin assembly protein At5g10410 (338 aa).

The region spanning 27-157 (FGSTAVKYIH…WVPKVLGSFP (131 aa)) is the ENTH domain.

Its subcellular location is the membrane. It is found in the clathrin-coated pit. It localises to the golgi apparatus. The protein resides in the cytoplasmic vesicle. The protein localises to the clathrin-coated vesicle. This chain is Putative clathrin assembly protein At5g10410, found in Arabidopsis thaliana (Mouse-ear cress).